The following is a 431-amino-acid chain: NADH-quinone oxidoreductase chain 1 (431 aa).

NAD(+) is bound at residue G54–G63. G167–S214 provides a ligand contact to FMN. Positions 346, 349, 352, and 392 each coordinate [4Fe-4S] cluster.

This sequence belongs to the complex I 51 kDa subunit family. In terms of assembly, NDH-1 is composed of at least 14 different subunits, Nqo1 to Nqo14. The complex has a L-shaped structure, with the hydrophobic arm (subunits Nqo7, Nqo8, Nqo10 to Nqo14) embedded in the inner membrane and the hydrophilic peripheral arm (subunits Nqo1 to Nqo6, Nqo9) protruding into the bacterial cytoplasm. The hydrophilic domain contains all the redox centers. Requires FMN as cofactor. The cofactor is [4Fe-4S] cluster.

The protein localises to the cell inner membrane. The catalysed reaction is a quinone + NADH + 5 H(+)(in) = a quinol + NAD(+) + 4 H(+)(out). Functionally, NDH-1 shuttles electrons from NADH, via FMN and iron-sulfur (Fe-S) centers, to quinones in the respiratory chain. The immediate electron acceptor for the enzyme in this species is believed to be ubiquinone. Couples the redox reaction to proton translocation (for every two electrons transferred, four hydrogen ions are translocated across the cytoplasmic membrane), and thus conserves the redox energy in a proton gradient. This chain is NADH-quinone oxidoreductase chain 1 (nqo1), found in Paracoccus denitrificans.